The following is a 419-amino-acid chain: Gamma-glutamyl phosphate reductase (419 aa).

Belongs to the gamma-glutamyl phosphate reductase family.

It is found in the cytoplasm. The catalysed reaction is L-glutamate 5-semialdehyde + phosphate + NADP(+) = L-glutamyl 5-phosphate + NADPH + H(+). Its pathway is amino-acid biosynthesis; L-proline biosynthesis; L-glutamate 5-semialdehyde from L-glutamate: step 2/2. In terms of biological role, catalyzes the NADPH-dependent reduction of L-glutamate 5-phosphate into L-glutamate 5-semialdehyde and phosphate. The product spontaneously undergoes cyclization to form 1-pyrroline-5-carboxylate. The polypeptide is Gamma-glutamyl phosphate reductase (Bordetella parapertussis (strain 12822 / ATCC BAA-587 / NCTC 13253)).